The sequence spans 202 residues: Urease accessory protein UreF (202 aa).

It belongs to the UreF family. As to quaternary structure, ureD, UreF and UreG form a complex that acts as a GTP-hydrolysis-dependent molecular chaperone, activating the urease apoprotein by helping to assemble the nickel containing metallocenter of UreC. The UreE protein probably delivers the nickel.

It localises to the cytoplasm. In terms of biological role, required for maturation of urease via the functional incorporation of the urease nickel metallocenter. In Sporosarcina pasteurii (Bacillus pasteurii), this protein is Urease accessory protein UreF.